Consider the following 155-residue polypeptide: Endoribonuclease YbeY (155 aa).

Residues His-113, His-117, and His-123 each coordinate Zn(2+).

It belongs to the endoribonuclease YbeY family. Zn(2+) serves as cofactor.

It localises to the cytoplasm. Single strand-specific metallo-endoribonuclease involved in late-stage 70S ribosome quality control and in maturation of the 3' terminus of the 16S rRNA. The polypeptide is Endoribonuclease YbeY (Ureaplasma urealyticum serovar 10 (strain ATCC 33699 / Western)).